The sequence spans 316 residues: Probable cell division protein WhiA (316 aa).

Residues 275–309 (TLKELGEMVSGGKISKSGINHRLRKIDEIAEKLRA) constitute a DNA-binding region (H-T-H motif).

It belongs to the WhiA family.

In terms of biological role, involved in cell division and chromosome segregation. This Bacillus mycoides (strain KBAB4) (Bacillus weihenstephanensis) protein is Probable cell division protein WhiA.